Here is a 292-residue protein sequence, read N- to C-terminus: 1D-myo-inositol 2-acetamido-2-deoxy-alpha-D-glucopyranoside deacetylase (292 aa).

Zn(2+) contacts are provided by histidine 11, aspartate 14, and histidine 146.

It belongs to the MshB deacetylase family. The cofactor is Zn(2+).

It catalyses the reaction 1D-myo-inositol 2-acetamido-2-deoxy-alpha-D-glucopyranoside + H2O = 1D-myo-inositol 2-amino-2-deoxy-alpha-D-glucopyranoside + acetate. Catalyzes the deacetylation of 1D-myo-inositol 2-acetamido-2-deoxy-alpha-D-glucopyranoside (GlcNAc-Ins) in the mycothiol biosynthesis pathway. The sequence is that of 1D-myo-inositol 2-acetamido-2-deoxy-alpha-D-glucopyranoside deacetylase from Acidothermus cellulolyticus (strain ATCC 43068 / DSM 8971 / 11B).